An 822-amino-acid chain; its full sequence is Outer dense fiber protein 2 (822 aa).

The disordered stretch occupies residues 26–45 (KGQKTTPAKCQQKHKQKMKG). Coiled-coil stretches lie at residues 113 to 418 (CKMN…EECA), 452 to 490 (DKSD…ALMD), and 516 to 796 (MEEK…NYVQ).

It belongs to the ODF2 family. In terms of assembly, self-associates. Associates with microtubules and forms a fibrillar structure partially linked to the microtubule network.

It localises to the cytoplasm. It is found in the cytoskeleton. The protein localises to the microtubule organizing center. Its subcellular location is the centrosome. The protein resides in the cell projection. It localises to the cilium. It is found in the centriole. The protein localises to the spindle pole. Its subcellular location is the flagellum. In terms of biological role, seems to be a major component of sperm tail outer dense fibers (ODF). ODFs are filamentous structures located on the outside of the axoneme in the midpiece and principal piece of the mammalian sperm tail and may help to maintain the passive elastic structures and elastic recoil of the sperm tail. In Gallus gallus (Chicken), this protein is Outer dense fiber protein 2 (ODF2).